Here is a 406-residue protein sequence, read N- to C-terminus: Mitochondrial ribosome-associated GTPase 2 (406 aa).

Residues 15-406 (FQGVGHWALS…LGQGRQPLRW (392 aa)) form a localized in the mitochondria region. Residues 30–406 (KPSRLLPQRA…LGQGRQPLRW (377 aa)) are not localized in the mitochondria. Residues 70 to 224 (RYFVDYRRVL…RVLHLELKTV (155 aa)) enclose the Obg domain. An OBG-type G domain is found at 225–390 (AHAGMVGFPN…LLLHLKVLYD (166 aa)). Residues 231 to 238 (GFPNAGKS), 256 to 260 (FTTLK), 278 to 281 (DIPG), 345 to 348 (NKID), and 371 to 373 (SAL) each bind GTP. Mg(2+) is bound by residues serine 238 and threonine 258.

The protein belongs to the TRAFAC class OBG-HflX-like GTPase superfamily. OBG GTPase family. In terms of assembly, associates with the mitochondrial ribosome large subunit; the association occurs in a GTP-dependent manner. Requires Mg(2+) as cofactor.

It localises to the mitochondrion. The protein localises to the mitochondrion inner membrane. Functionally, plays a role in the regulation of the mitochondrial ribosome assembly and of translational activity. Displays GTPase activity. Involved in the ribosome maturation process. This chain is Mitochondrial ribosome-associated GTPase 2 (MTG2), found in Homo sapiens (Human).